A 318-amino-acid polypeptide reads, in one-letter code: Lysophospholipase D GDPD3 (318 aa).

Residues 1–2 (MS) are Cytoplasmic-facing. Residues 3–23 (LLLYYALPALGSYAMLSIFFL) form a helical membrane-spanning segment. The Extracellular segment spans residues 24 to 198 (RRPHLLHTPR…KAANPEMPLS (175 aa)). One can recognise a GP-PDE domain in the interval 39-308 (IRLGAHRGGS…DYPTALRHYL (270 aa)). Glu71, Asp73, and His86 together coordinate a divalent metal cation. The helical transmembrane segment at 199–221 (FTISRGFWVLLSYYLGLLPFIPI) threads the bilayer. The Cytoplasmic segment spans residues 222-318 (PEKFFFCFLP…DNHGPAARTS (97 aa)).

Belongs to the glycerophosphoryl diester phosphodiesterase family. Widely expressed, with high level in kidney and ovary.

The protein resides in the membrane. The protein localises to the cytoplasm. Its subcellular location is the perinuclear region. It localises to the endoplasmic reticulum. The enzyme catalyses 1-hexadecanoyl-sn-glycero-3-phosphocholine + H2O = 1-hexadecanoyl-sn-glycero-3-phosphate + choline + H(+). It catalyses the reaction 1-hexadecanoyl-sn-glycero-3-phosphocholine + H2O = sn-glycerol 3-phosphocholine + hexadecanoate + H(+). The catalysed reaction is 1-O-(1Z-octadecenyl)-sn-glycero-3-phospho-N-hexadecanoyl-ethanolamine + H2O = 1-O-(1Z-octadecenyl)-sn-glycero-3-phosphate + N-hexadecanoylethanolamine + H(+). It carries out the reaction N-(5Z,8Z,11Z,14Z-eicosatetraenoyl)-1-(9Z-octadecenoyl)-sn-glycero-3-phosphoethanolamine + H2O = N-(5Z,8Z,11Z,14Z-eicosatetraenoyl)-ethanolamine + 1-(9Z-octadecenoyl)-sn-glycero-3-phosphate + H(+). The enzyme catalyses N,1-di-(9Z-octadecenoyl)-sn-glycero-3-phosphoethanolamine + H2O = N-(9Z-octadecenoyl) ethanolamine + 1-(9Z-octadecenoyl)-sn-glycero-3-phosphate + H(+). It catalyses the reaction N-hexadecanoyl-1-(9Z-octadecenoyl)-sn-glycero-3-phosphoethanolamine + H2O = N-hexadecanoylethanolamine + 1-(9Z-octadecenoyl)-sn-glycero-3-phosphate + H(+). The catalysed reaction is 1-O-hexadecyl-sn-glycero-3-phosphocholine + H2O = 1-O-hexadecyl-sn-glycero-3-phosphate + choline + H(+). Lysophospholipase D activity is stimulated by calcium. Loss of lysophospholipase D activity in presence of EDTA. Its function is as follows. Hydrolyzes lysoglycerophospholipids to produce lysophosphatidic acid (LPA) and the corresponding amines. Shows a preference for 1-O-alkyl-sn-glycero-3-phosphocholine (lyso-PAF), lysophosphatidylcholine (lyso-PC) and N-acylethanolamine lysophospholipids. Does not display glycerophosphodiester phosphodiesterase activity, since it cannot hydrolyze either glycerophosphoinositol or glycerophosphocholine. This chain is Lysophospholipase D GDPD3, found in Homo sapiens (Human).